A 513-amino-acid polypeptide reads, in one-letter code: Cytochrome P450 72A552 (513 aa).

The helical transmembrane segment at glutamate 2–tryptophan 22 threads the bilayer. Cysteine 460 contacts heme.

The protein belongs to the cytochrome P450 family. The cofactor is heme.

Its subcellular location is the membrane. The enzyme catalyses oleanolate + reduced [NADPH--hemoprotein reductase] + O2 = hederagenin + oxidized [NADPH--hemoprotein reductase] + H2O + H(+). Its function is as follows. Catalyzes the oxidation of oleanolate at the C-23 position to form hederagenin. The polypeptide is Cytochrome P450 72A552 (Barbarea vulgaris (Yellow rocket)).